Here is a 240-residue protein sequence, read N- to C-terminus: Dihydromonapterin reductase (240 aa).

Tyr-152 serves as the catalytic Proton acceptor.

It belongs to the short-chain dehydrogenases/reductases (SDR) family. FolM subfamily.

It carries out the reaction (6S)-5,6,7,8-tetrahydrofolate + NADP(+) = 7,8-dihydrofolate + NADPH + H(+). The catalysed reaction is 7,8-dihydromonapterin + NADPH + H(+) = 5,6,7,8-tetrahydromonapterin + NADP(+). Its function is as follows. Catalyzes the reduction of dihydromonapterin to tetrahydromonapterin. Also has lower activity with dihydrofolate. This chain is Dihydromonapterin reductase (folM), found in Shigella flexneri serotype 5b (strain 8401).